The sequence spans 917 residues: Probable dipeptidyl-aminopeptidase B (917 aa).

Residues 1 to 78 (MGVEKRINDE…EGDLEEGFVP (78 aa)) form a disordered region. Residues 1 to 90 (MGVEKRINDE…GGWSAPRKVS (90 aa)) are Cytoplasmic-facing. Residues 16–26 (AERDDKSRDSI) show a composition bias toward basic and acidic residues. Residues 27-49 (DSTSTASISLALLGGANGSAHGS) show a composition bias toward low complexity. Residues 55–65 (RKSENQEKYHD) show a composition bias toward basic and acidic residues. The helical; Signal-anchor for type II membrane protein transmembrane segment at 91 to 111 (VIFTLIVTLCIAGWLVAFFVL) threads the bilayer. The Vacuolar portion of the chain corresponds to 112-917 (LGRHKDSSKD…LGLINILRNG (806 aa)). N-linked (GlcNAc...) asparagine glycosylation is found at asparagine 350 and asparagine 465. The active-site Charge relay system is the serine 754. A glycan (N-linked (GlcNAc...) asparagine) is linked at asparagine 813. Catalysis depends on charge relay system residues aspartate 831 and histidine 864.

The protein belongs to the peptidase S9B family.

The protein localises to the vacuole membrane. It carries out the reaction Release of an N-terminal dipeptide, Xaa-Yaa-|-Zaa-, from a polypeptide, preferentially when Yaa is Pro, provided Zaa is neither Pro nor hydroxyproline.. In terms of biological role, type IV dipeptidyl-peptidase which removes N-terminal dipeptides sequentially from polypeptides having unsubstituted N-termini provided that the penultimate residue is proline. The sequence is that of Probable dipeptidyl-aminopeptidase B (DAPB) from Coccidioides posadasii (strain C735) (Valley fever fungus).